A 130-amino-acid chain; its full sequence is Encapsulin nanocompartment cargo protein EncC (130 aa).

Fe cation contacts are provided by Glu-31, Glu-61, and His-64. A Di-iron-binding motif motif is present at residues 61-64 (EREH). A disordered region spans residues 103–130 (EAVGKEGAAPSPADVTPEKRLTVGSLRR). The interval 123–130 (LTVGSLRR) is probable targeting peptide.

It belongs to the ferritin-like superfamily.

Its subcellular location is the encapsulin nanocompartment. Cargo protein of a type 1 encapsulin nanocompartment. May help nucleate Fe atoms in the interior of the encapsulin nanocompartment. Present in about 92 copies/encapsulin nanocompartment. This Myxococcus xanthus (strain DK1622) protein is Encapsulin nanocompartment cargo protein EncC.